Reading from the N-terminus, the 631-residue chain is ATP-dependent zinc metalloprotease FtsH (631 aa).

The Stromal segment spans residues 1-2 (MK). The chain crosses the membrane as a helical span at residues 3–23 (ISWKNILLTLIPLGLISFLVW). The Lumenal segment spans residues 24-118 (QGFNNTTNPQ…AHATNDSTPA (95 aa)). Residues 119-139 (WSLIGNLIFPILLIAGLAFLF) traverse the membrane as a helical segment. The Stromal segment spans residues 140–631 (RRSSNLPGGP…IDYKSQLKST (492 aa)). Residue 213-220 (GPPGTGKT) coordinates ATP. His434 is a binding site for Zn(2+). Glu435 is an active-site residue. Zn(2+)-binding residues include His438 and Asp512.

In the central section; belongs to the AAA ATPase family. The protein in the C-terminal section; belongs to the peptidase M41 family. Homohexamer. Requires Zn(2+) as cofactor.

Its subcellular location is the plastid. The protein resides in the chloroplast thylakoid membrane. Its function is as follows. Acts as a processive, ATP-dependent zinc metallopeptidase. This chain is ATP-dependent zinc metalloprotease FtsH, found in Guillardia theta (Cryptophyte).